Reading from the N-terminus, the 209-residue chain is Probable phosphatidylglycerophosphate synthase (209 aa).

The next 4 helical transmembrane spans lie at 32 to 52 (ILTL…FYGG), 105 to 125 (ALIG…LILT), 147 to 167 (WGGK…VLPL), and 171 to 191 (LHVA…ITGV).

This sequence belongs to the CDP-alcohol phosphatidyltransferase class-I family.

The protein resides in the cell membrane. It carries out the reaction a CDP-1,2-diacyl-sn-glycerol + sn-glycerol 3-phosphate = a 1,2-diacyl-sn-glycero-3-phospho-(1'-sn-glycero-3'-phosphate) + CMP + H(+). It participates in lipid metabolism; phospholipid metabolism. Probably catalyzes the synthesis of phosphatidylglycerophosphate by transferring a phosphatidyl group from CDP-diacylglycerol to glycerol 3-phosphate. This chain is Probable phosphatidylglycerophosphate synthase, found in Mycobacterium tuberculosis (strain CDC 1551 / Oshkosh).